The chain runs to 247 residues: 1-(5-phosphoribosyl)-5-[(5-phosphoribosylamino)methylideneamino] imidazole-4-carboxamide isomerase (247 aa).

Residue Asp8 is the Proton acceptor of the active site. The active-site Proton donor is the Asp131.

It belongs to the HisA/HisF family.

The protein resides in the cytoplasm. The catalysed reaction is 1-(5-phospho-beta-D-ribosyl)-5-[(5-phospho-beta-D-ribosylamino)methylideneamino]imidazole-4-carboxamide = 5-[(5-phospho-1-deoxy-D-ribulos-1-ylimino)methylamino]-1-(5-phospho-beta-D-ribosyl)imidazole-4-carboxamide. It participates in amino-acid biosynthesis; L-histidine biosynthesis; L-histidine from 5-phospho-alpha-D-ribose 1-diphosphate: step 4/9. The sequence is that of 1-(5-phosphoribosyl)-5-[(5-phosphoribosylamino)methylideneamino] imidazole-4-carboxamide isomerase from Acidovorax sp. (strain JS42).